The chain runs to 270 residues: Pyrroline-5-carboxylate reductase (270 aa).

It belongs to the pyrroline-5-carboxylate reductase family.

Its subcellular location is the cytoplasm. The enzyme catalyses L-proline + NADP(+) = (S)-1-pyrroline-5-carboxylate + NADPH + 2 H(+). It catalyses the reaction L-proline + NAD(+) = (S)-1-pyrroline-5-carboxylate + NADH + 2 H(+). It functions in the pathway amino-acid biosynthesis; L-proline biosynthesis; L-proline from L-glutamate 5-semialdehyde: step 1/1. Its function is as follows. Catalyzes the reduction of 1-pyrroline-5-carboxylate (PCA) to L-proline. This is Pyrroline-5-carboxylate reductase from Corynebacterium melassecola.